The following is a 477-amino-acid chain: RNA pseudouridine synthase 6, chloroplastic (477 aa).

A chloroplast-targeting transit peptide spans 1 to 52 (MPKAAASLASLLPQLWHRPVQPPPFLHRALSSSSPLLRRHRAALHSPAAPLS). Positions 98-205 (EVAVDFISRS…FPRCYEIDWK (108 aa)) constitute an S4 RNA-binding domain. Asp-258 is an active-site residue.

Belongs to the pseudouridine synthase RluA family.

It localises to the plastid. It is found in the chloroplast. The catalysed reaction is a uridine in RNA = a pseudouridine in RNA. The protein is RNA pseudouridine synthase 6, chloroplastic of Oryza sativa subsp. japonica (Rice).